The primary structure comprises 268 residues: Myb-related protein 315 (268 aa).

HTH myb-type domains lie at 9-61 (KFGL…MNYL) and 62-116 (RPDL…KKKL). DNA-binding regions (H-T-H motif) lie at residues 37–61 (WRVI…MNYL) and 89–112 (WSKI…NTHI).

As to expression, expressed in roots, stems, leaves, seed pods and flowers. Strongest expression in the stem.

It is found in the nucleus. Transcription factor. This Antirrhinum majus (Garden snapdragon) protein is Myb-related protein 315.